Consider the following 55-residue polypeptide: Large ribosomal subunit protein bL33 (55 aa).

The protein belongs to the bacterial ribosomal protein bL33 family.

The sequence is that of Large ribosomal subunit protein bL33 from Vibrio atlanticus (strain LGP32) (Vibrio splendidus (strain Mel32)).